We begin with the raw amino-acid sequence, 682 residues long: DNA-directed RNA polymerase subunit beta' (682 aa).

Zn(2+) contacts are provided by cysteine 69, cysteine 71, cysteine 87, and cysteine 90. Mg(2+) is bound by residues aspartate 489, aspartate 491, and aspartate 493.

It belongs to the RNA polymerase beta' chain family. RpoC1 subfamily. As to quaternary structure, in plastids the minimal PEP RNA polymerase catalytic core is composed of four subunits: alpha, beta, beta', and beta''. When a (nuclear-encoded) sigma factor is associated with the core the holoenzyme is formed, which can initiate transcription. The cofactor is Mg(2+). Zn(2+) is required as a cofactor.

Its subcellular location is the plastid. The protein resides in the chloroplast. It carries out the reaction RNA(n) + a ribonucleoside 5'-triphosphate = RNA(n+1) + diphosphate. In terms of biological role, DNA-dependent RNA polymerase catalyzes the transcription of DNA into RNA using the four ribonucleoside triphosphates as substrates. This Acorus gramineus (Dwarf sweet flag) protein is DNA-directed RNA polymerase subunit beta'.